The primary structure comprises 414 residues: Calcium/calmodulin-dependent protein kinase cmkA (414 aa).

Positions 23-278 (YRFGRTLGAG…SEEALKHPWL (256 aa)) constitute a Protein kinase domain. Residues 29 to 37 (LGAGTYGIV) and Lys50 contribute to the ATP site. Asp142 acts as the Proton acceptor in catalysis. The tract at residues 278–314 (LKGESASDRDLLPEIRAYIARSRLKRGIEIIKLANRI) is autoinhibitory domain. The tract at residues 293–315 (RAYIARSRLKRGIEIIKLANRIE) is calmodulin-binding. Disordered regions lie at residues 320 to 375 (QEED…KRSL) and 394 to 414 (EMKENEEREKVEREARERAHS). The segment covering 351 to 364 (STENSNTHPASTGN) has biased composition (polar residues).

The protein belongs to the protein kinase superfamily. CAMK Ser/Thr protein kinase family. CaMK subfamily. Monomer. In terms of processing, autophosphorylated in a calcium/calmodulin-dependent manner.

The enzyme catalyses L-seryl-[protein] + ATP = O-phospho-L-seryl-[protein] + ADP + H(+). It carries out the reaction L-threonyl-[protein] + ATP = O-phospho-L-threonyl-[protein] + ADP + H(+). With respect to regulation, activated by Ca(2+)/calmodulin. Binding of calmodulin may relieve intrasteric autoinhibition. Calcium/calmodulin-dependent protein kinase. Required in nuclear division cycle for progression from G2 to mitosis. Required for hyphal growth. In Emericella nidulans (strain FGSC A4 / ATCC 38163 / CBS 112.46 / NRRL 194 / M139) (Aspergillus nidulans), this protein is Calcium/calmodulin-dependent protein kinase cmkA (cmkA).